A 758-amino-acid polypeptide reads, in one-letter code: Relaxin receptor 1 (758 aa).

Residues 1–408 are Extracellular-facing; sequence MTSGPFFFCV…LENLLASIIQ (408 aa). Residues 26–63 form the LDL-receptor class A domain; that stretch reads SCPLGSFPCGNISKCLPQLLHCNGVDDCGNQADEDNCG. 3 disulfide bridges follow: Cys27/Cys40, Cys34/Cys53, and Cys47/Cys62. Residue Asn36 is glycosylated (N-linked (GlcNAc...) asparagine). The Ca(2+) site is built by Leu45, Asn48, Val50, Asp52, Asp58, and Glu59. 11 LRR repeats span residues 105–125, 126–148, 149–172, 173–196, 198–220, 221–244, 246–269, 270–293, 294–317, 319–341, and 342–365; these read LCRD…PSVS, SNVT…SFRK, YHDL…AFRG, LHSL…VFED, HRLE…TFYG, LNSL…PLCQ, MPRL…TFIS, CNNL…AFTH, LQKL…IFKD, KELS…QFDY, and LAKL…MFRP. An N-linked (GlcNAc...) asparagine glycan is attached at Asn127. Asn264 and Asn272 each carry an N-linked (GlcNAc...) asparagine glycan. Asn325 carries an N-linked (GlcNAc...) asparagine glycan. Asn368 carries N-linked (GlcNAc...) asparagine glycosylation. Residues 409-429 traverse the membrane as a helical segment; that stretch reads RVFVWVVSAITCFGNIFVICM. Residues 430–443 lie on the Cytoplasmic side of the membrane; that stretch reads RPYIRSENKLHAMS. The chain crosses the membrane as a helical span at residues 444 to 464; that stretch reads IMSLCCADCLMGVYLFVIGAF. Residues 465–486 are Extracellular-facing; sequence DLKFRGEYRKHAQPWMESVHCQ. A disulfide bridge connects residues Cys485 and Cys563. The helical transmembrane segment at 487–507 threads the bilayer; the sequence is FMGSLAVLSTEVSVLLLTFLT. Over 508–527 the chain is Cytoplasmic; sequence LEKYICIVYPFRCLRPRKCR. Residues 528–548 form a helical membrane-spanning segment; that stretch reads TVAVLIFIWITGFIVAFAPLG. The Extracellular portion of the chain corresponds to 549–577; the sequence is NKEFFKNYYGTNGVCFPLHSEDTGSTGAQ. A helical membrane pass occupies residues 578-598; it reads IYSVVIFLGINLVAFIIIVFS. Residues 599 to 629 are Cytoplasmic-facing; the sequence is YGSMFYSVHQSTITATEIQKQVKKEMILAKR. The chain crosses the membrane as a helical span at residues 630 to 650; the sequence is FFFIVFTDALCWIPIFILKFL. Residues 651-660 are Extracellular-facing; it reads SLIRVEIPDT. The helical transmembrane segment at 661 to 681 threads the bilayer; it reads ITSWVVIFILPINSALNPIIY. The Cytoplasmic portion of the chain corresponds to 682-758; that stretch reads TLTTRPFKEM…SRSSRLNSYS (77 aa).

Belongs to the G-protein coupled receptor 1 family. In terms of assembly, interacts with C1QTNF8. As to expression, detected in brain cortex, and at low levels in testis.

The protein resides in the cell membrane. In terms of biological role, receptor for relaxins. The activity of this receptor is mediated by G proteins leading to stimulation of adenylate cyclase and an increase of cAMP. Binding of the ligand may also activate a tyrosine kinase pathway that inhibits the activity of a phosphodiesterase that degrades cAMP. This Rattus norvegicus (Rat) protein is Relaxin receptor 1 (Rxfp1).